A 390-amino-acid chain; its full sequence is Phosphopentomutase (390 aa).

Positions 12, 284, 289, 325, 326, and 337 each coordinate Mn(2+).

This sequence belongs to the phosphopentomutase family. The cofactor is Mn(2+).

The protein localises to the cytoplasm. The catalysed reaction is 2-deoxy-alpha-D-ribose 1-phosphate = 2-deoxy-D-ribose 5-phosphate. It carries out the reaction alpha-D-ribose 1-phosphate = D-ribose 5-phosphate. It participates in carbohydrate degradation; 2-deoxy-D-ribose 1-phosphate degradation; D-glyceraldehyde 3-phosphate and acetaldehyde from 2-deoxy-alpha-D-ribose 1-phosphate: step 1/2. In terms of biological role, isomerase that catalyzes the conversion of deoxy-ribose 1-phosphate (dRib-1-P) and ribose 1-phosphate (Rib-1-P) to deoxy-ribose 5-phosphate (dRib-5-P) and ribose 5-phosphate (Rib-5-P), respectively. This is Phosphopentomutase from Macrococcus caseolyticus (strain JCSC5402) (Macrococcoides caseolyticum).